A 606-amino-acid chain; its full sequence is Chaperone protein DnaK (606 aa).

Threonine 174 carries the post-translational modification Phosphothreonine; by autocatalysis. The disordered stretch occupies residues 576 to 606 (QAAGSANPGGSQGTSQGNVYEADYKVEDDNK). Residues 597 to 606 (ADYKVEDDNK) show a composition bias toward basic and acidic residues.

It belongs to the heat shock protein 70 family.

Functionally, acts as a chaperone. This is Chaperone protein DnaK from Caldanaerobacter subterraneus subsp. tengcongensis (strain DSM 15242 / JCM 11007 / NBRC 100824 / MB4) (Thermoanaerobacter tengcongensis).